The sequence spans 348 residues: tRNA pseudouridine synthase D (348 aa).

Residue Asp-78 is the Nucleophile of the active site. The region spanning 150–304 is the TRUD domain; that stretch reads GLPNFFGPQR…AEGTRRAARL (155 aa).

This sequence belongs to the pseudouridine synthase TruD family.

The enzyme catalyses uridine(13) in tRNA = pseudouridine(13) in tRNA. Its function is as follows. Responsible for synthesis of pseudouridine from uracil-13 in transfer RNAs. The chain is tRNA pseudouridine synthase D from Anaeromyxobacter dehalogenans (strain 2CP-1 / ATCC BAA-258).